A 554-amino-acid chain; its full sequence is HMG box-containing protein 4 (554 aa).

Disordered regions lie at residues R14–Y34, Q47–Q368, and H418–K468. Residues T117–H127 are compositionally biased toward polar residues. Over residues T221–S230 the composition is skewed to basic and acidic residues. Positions P242 to G255 are enriched in polar residues. Over residues M272–K300 the composition is skewed to basic residues. The segment covering L317–P335 has biased composition (pro residues). The span at H342 to K358 shows a compositional bias: basic and acidic residues. A DNA-binding region (HMG box) is located at residues K360–V428. Residues S434–P466 show a composition bias toward low complexity.

In terms of assembly, interacts with nlk.2.

It localises to the nucleus. Its function is as follows. Negatively regulates Wnt/beta-catenin signaling during development. The polypeptide is HMG box-containing protein 4 (hmgxb4) (Xenopus tropicalis (Western clawed frog)).